A 272-amino-acid polypeptide reads, in one-letter code: Glycosylphosphatidylinositol anchor biosynthesis protein 11 (272 aa).

Over residues 21–31 the composition is skewed to polar residues; it reads QSTSTTKSTPG. The segment at 21–48 is disordered; it reads QSTSTTKSTPGSQATESSTTTAGSSSSL. A compositionally biased stretch (low complexity) spans 32–48; sequence SQATESSTTTAGSSSSL. A run of 5 helical transmembrane segments spans residues 91–111, 145–165, 177–197, 215–235, and 248–268; these read VMLN…LLCL, LLAS…MVLF, FLCA…VHGV, TFGG…PIPL, and ILCG…TLFW.

This sequence belongs to the PIGF family.

It is found in the endoplasmic reticulum membrane. It functions in the pathway glycolipid biosynthesis; glycosylphosphatidylinositol-anchor biosynthesis. Acts in the GPI biosynthetic pathway between GlcNAc-PI synthesis and GPI transfer to protein. This is Glycosylphosphatidylinositol anchor biosynthesis protein 11 (gpi-11) from Neurospora crassa (strain ATCC 24698 / 74-OR23-1A / CBS 708.71 / DSM 1257 / FGSC 987).